Consider the following 312-residue polypeptide: MRIAFLGTPEFSVACLAELVAAGHEIACVYSQPPAPRGRGQDLKPSPVHAFAESLGLPVRTPVSMKTAEEIEAFRALDLDAAVVVAFGQILVRDVLEAPRLGCFNLHASLLPRWRGAAPIQRAIMAGDAVTGVQVMRMSEGLDEGPVLMGEQVRIDALETAGTLHDKLAAVGSRMLPVALAAIERGGARETPQSEEGVTYAKKIKAAEARIDWTRSAAEVDRHIRGLSPFPGAWFEAPSEKGSVRVKALLSRVEDGEGAPGVALDDALLIACGANGEGGAVRLLKAQREGKGAQDAEVFLRGFPLAAGTALA.

109-112 (SLLP) provides a ligand contact to (6S)-5,6,7,8-tetrahydrofolate.

The protein belongs to the Fmt family.

The enzyme catalyses L-methionyl-tRNA(fMet) + (6R)-10-formyltetrahydrofolate = N-formyl-L-methionyl-tRNA(fMet) + (6S)-5,6,7,8-tetrahydrofolate + H(+). Functionally, attaches a formyl group to the free amino group of methionyl-tRNA(fMet). The formyl group appears to play a dual role in the initiator identity of N-formylmethionyl-tRNA by promoting its recognition by IF2 and preventing the misappropriation of this tRNA by the elongation apparatus. This Caulobacter sp. (strain K31) protein is Methionyl-tRNA formyltransferase.